A 649-amino-acid chain; its full sequence is Protein teflon (649 aa).

The C2H2-type 1 zinc finger occupies 33-56 (LYCHFCRDLFTQLPEFLRHLQSNH). The tract at residues 78–126 (EQGKAHEDAQSAGHNSSSGDSSSLMNSEDSRAIEGSEDNSDNSPMKPEQ) is disordered. Residues 88–104 (SAGHNSSSGDSSSLMNS) are compositionally biased toward low complexity. C2H2-type zinc fingers lie at residues 599 to 621 (YFCK…LISH) and 625 to 648 (FQCT…RNAH).

This sequence belongs to the Teflon family. Expressed at a low level in a variety of tissues, highest expression is in testis.

Its subcellular location is the nucleus. It is found in the chromosome. Functionally, specifically required in males for proper segregation of autosomal bivalents at meiosis I. Expression is required in the male germ line prior to spermatocyte stage S4. May have a role as a bridging molecule maintaining adhesion to hold autosome bivalents together via heterochromatic connections. The chain is Protein teflon from Drosophila melanogaster (Fruit fly).